We begin with the raw amino-acid sequence, 224 residues long: Cysteine S-methyltransferase NleE (224 aa).

The interaction with host proteins TAB2, TAB3 and ZRANB3 stretch occupies residues 49-52 (GITR). S-adenosyl-L-methionine contacts are provided by Ala92, Ser98, Arg107, Gln111, Tyr204, and Glu208.

Belongs to the NleE/OspZ family. As to quaternary structure, monomer.

It localises to the secreted. It is found in the host nucleus. The catalysed reaction is L-cysteinyl-[protein] + S-adenosyl-L-methionine = S-methyl-L-cysteinyl-[protein] + S-adenosyl-L-homocysteine + H(+). Cysteine methyltransferase effector that inhibits host cell NF-kappa-B activation by preventing nuclear translocation of host protein RELA/p65. Acts by mediating cysteine methylation of host proteins TAB2 and TAB3: methylation of a conserved cysteine residue of the RanBP2-type zinc finger (NZF) of TAB2 and TAB3 disrupts zinc-binding, thereby inactivating the ubiquitin chain-binding activity of TAB2 and TAB3, leading to NF-kappa-B inactivation. Also mediates cysteine methylation of host protein ZRANB3, inactivating its ability to bind ubiquitin chains. The protein is Cysteine S-methyltransferase NleE of Escherichia coli O157:H7.